We begin with the raw amino-acid sequence, 288 residues long: Elongation factor Ts (288 aa).

The interval 82-85 (TDFV) is involved in Mg(2+) ion dislocation from EF-Tu.

Belongs to the EF-Ts family.

The protein localises to the cytoplasm. In terms of biological role, associates with the EF-Tu.GDP complex and induces the exchange of GDP to GTP. It remains bound to the aminoacyl-tRNA.EF-Tu.GTP complex up to the GTP hydrolysis stage on the ribosome. In Chlorobaculum tepidum (strain ATCC 49652 / DSM 12025 / NBRC 103806 / TLS) (Chlorobium tepidum), this protein is Elongation factor Ts.